The sequence spans 376 residues: Geranylgeranyl transferase type-1 subunit beta (376 aa).

PFTB repeat units follow at residues 128–179 (KRSL…YICG), 192–231 (TEKL…ALLS), 259–301 (MKFE…HLLT), and 310–353 (TELV…ALIE). Geranylgeranyl diphosphate-binding positions include 216–218 (HSG) and 280–283 (RENK). Residues Asp286 and Cys288 each coordinate Zn(2+). Residue 289–292 (YAFW) coordinates geranylgeranyl diphosphate. His341 serves as a coordination point for Zn(2+).

The protein belongs to the protein prenyltransferase subunit beta family. Heterodimer of an alpha (RAM2) and a beta (CDC43) subunit. Zn(2+) is required as a cofactor. Mg(2+) serves as cofactor.

It localises to the cytoplasm. The enzyme catalyses geranylgeranyl diphosphate + L-cysteinyl-[protein] = S-geranylgeranyl-L-cysteinyl-[protein] + diphosphate. In terms of biological role, catalyzes the transfer of a geranyl-geranyl moiety from geranyl-geranyl diphosphate to proteins having the C-terminal sequence Cys-Ile-Ile-Leu or Cys-Val-Leu-Leu. Acts, among other substrates, on Rho1 and Rho2 and CDC42 proteins. Participates in a RAS-like C-terminal modification of proteins involved in nuclear division and bud growth. It is involved in bud positioning and cell polarity. The beta subunit is responsible for isoprenoid and peptide-binding. The chain is Geranylgeranyl transferase type-1 subunit beta (CDC43) from Saccharomyces cerevisiae (strain ATCC 204508 / S288c) (Baker's yeast).